A 392-amino-acid chain; its full sequence is 5-amino-6-(D-ribitylamino)uracil--L-tyrosine 4-hydroxyphenyl transferase (392 aa).

Positions 60 to 307 (VTYVVNRNIN…MAIARLYLGK (248 aa)) constitute a Radical SAM core domain. Positions 74, 78, and 81 each coordinate [4Fe-4S] cluster.

It belongs to the radical SAM superfamily. CofH family. As to quaternary structure, consists of two subunits, CofG and CofH. Requires [4Fe-4S] cluster as cofactor.

The catalysed reaction is 5-amino-6-(D-ribitylamino)uracil + L-tyrosine + S-adenosyl-L-methionine = 5-amino-5-(4-hydroxybenzyl)-6-(D-ribitylimino)-5,6-dihydrouracil + 2-iminoacetate + 5'-deoxyadenosine + L-methionine + H(+). Its pathway is cofactor biosynthesis; coenzyme F0 biosynthesis. Its function is as follows. Catalyzes the radical-mediated synthesis of 5-amino-5-(4-hydroxybenzyl)-6-(D-ribitylimino)-5,6-dihydrouracil from 5-amino-6-(D-ribitylamino)uracil and L-tyrosine. This is 5-amino-6-(D-ribitylamino)uracil--L-tyrosine 4-hydroxyphenyl transferase from Synechocystis sp. (strain ATCC 27184 / PCC 6803 / Kazusa).